The chain runs to 280 residues: Hydroxyacylglutathione hydrolase, mitochondrial (280 aa).

The residue at position 61 (K61) is an N6-acetyllysine. Zn(2+) contacts are provided by H74, H76, D78, and H79. N6-acetyllysine is present on K88. Residues H130 and D154 each contribute to the Zn(2+) site. Substrate contacts are provided by residues 163–165 (KFY) and 193–195 (HEY). H193 is a Zn(2+) binding site. K201 carries the post-translational modification N6-acetyllysine; alternate. Position 201 is an N6-succinyllysine; alternate (K201). Residue 269–272 (RREK) participates in substrate binding.

Belongs to the metallo-beta-lactamase superfamily. Glyoxalase II family. In terms of assembly, monomer. Zn(2+) serves as cofactor. As to expression, testis.

It localises to the mitochondrion matrix. The protein resides in the cytoplasm. The catalysed reaction is an S-(2-hydroxyacyl)glutathione + H2O = a 2-hydroxy carboxylate + glutathione + H(+). It carries out the reaction (R)-S-lactoylglutathione + H2O = (R)-lactate + glutathione + H(+). The protein operates within secondary metabolite metabolism; methylglyoxal degradation; (R)-lactate from methylglyoxal: step 2/2. Its function is as follows. Thiolesterase that catalyzes the hydrolysis of S-D-lactoyl-glutathione to form glutathione and D-lactic acid. This Callithrix jacchus (White-tufted-ear marmoset) protein is Hydroxyacylglutathione hydrolase, mitochondrial (HAGH).